A 114-amino-acid chain; its full sequence is Beta-microseminoprotein (114 aa).

The first 20 residues, 1–20 (MNVLLGGFVIFATFVTLCNA), serve as a signal peptide directing secretion. Disulfide bonds link Cys-22–Cys-70, Cys-38–Cys-62, Cys-57–Cys-93, Cys-60–Cys-69, and Cys-84–Cys-107.

The protein belongs to the beta-microseminoprotein family. In terms of assembly, homodimer; Interacts with PI16.

It is found in the secreted. This Papio anubis (Olive baboon) protein is Beta-microseminoprotein (MSMB).